The primary structure comprises 516 residues: MASWSAPSPSLVEYFEGQTSFQCGYCKNKLGSRSYGMWAHSMTVQDYQDLIDRGWRRSGKYVYKPVMDQTCCPQYTIRCHPLQFQPSKSHKKVLKKMLKFLAKGEISKGNCEDEPMDSTVEDAVDGDFALINKLDIKCDLKTLSDLKGSIESEEKEKEKSIKKEGSKEFIHPQSIEEKLGSGEPSHPIKVHIGPKPGKGADLSKPPCRKAREMRKERQRLKRMQQASAAASEAQGQPVCLLPKAKSNQPKSLEDLIFQSLPENASHKLEVRVVRSSPPSPQFRATFQESYQVYKRYQMVVHKDPPDKPTVSQFTRFLCSSPLEAEHPADGPECGYGSFHQQYWLDGKIIAVGVLDILPYCVSSVYLYYDPDYSFLSLGVYSALREIAFTRQLHEKTSQLSYYYMGFYIHSCPKMRYKGQYRPSDLLCPETYVWVPIEQCLPSLDNSKYCRFNQDPEAEDEGRSKELDRLRVFHRRSAMPYGVYKNHQEDPSEEAGVLEYANLVGQKCSERMLLFRH.

The segment covering Ile150–Gly180 has biased composition (basic and acidic residues). Residues Ile150–Pro206 form a disordered region.

It belongs to the R-transferase family. As to quaternary structure, monomer. Interacts with LIAT1; LIAT1 is not a substrate of ATE1, the interaction takes place in the cytoplasm and seems to increase ATE1 arginyltransferase activity. In terms of assembly, interacts with LIAT1; has a higher affinity than the other isoforms. Widely expressed.

The protein resides in the nucleus. It is found in the cytoplasm. It catalyses the reaction an N-terminal L-alpha-aminoacyl-[protein] + L-arginyl-tRNA(Arg) = an N-terminal L-arginyl-L-aminoacyl-[protein] + tRNA(Arg) + H(+). Functionally, involved in the post-translational conjugation of arginine to the N-terminal aspartate or glutamate of a protein. This arginylation is required for degradation of the protein via the ubiquitin pathway. Does not arginylate cysteine residues. The polypeptide is Arginyl-tRNA--protein transferase 1 (Mus musculus (Mouse)).